A 272-amino-acid polypeptide reads, in one-letter code: Dermonecrotic toxin SpeSicTox-betaIB1b (272 aa).

Residue H5 is part of the active site. Mg(2+) contacts are provided by E25 and D27. Residue H41 is the Nucleophile of the active site. 2 disulfide bridges follow: C45–C51 and C47–C191. D85 is a Mg(2+) binding site.

It belongs to the arthropod phospholipase D family. Class II subfamily. It depends on Mg(2+) as a cofactor. In terms of tissue distribution, expressed by the venom gland.

Its subcellular location is the secreted. It catalyses the reaction an N-(acyl)-sphingosylphosphocholine = an N-(acyl)-sphingosyl-1,3-cyclic phosphate + choline. The catalysed reaction is an N-(acyl)-sphingosylphosphoethanolamine = an N-(acyl)-sphingosyl-1,3-cyclic phosphate + ethanolamine. The enzyme catalyses a 1-acyl-sn-glycero-3-phosphocholine = a 1-acyl-sn-glycero-2,3-cyclic phosphate + choline. It carries out the reaction a 1-acyl-sn-glycero-3-phosphoethanolamine = a 1-acyl-sn-glycero-2,3-cyclic phosphate + ethanolamine. Its function is as follows. Dermonecrotic toxins cleave the phosphodiester linkage between the phosphate and headgroup of certain phospholipids (sphingolipid and lysolipid substrates), forming an alcohol (often choline) and a cyclic phosphate. This toxin acts on sphingomyelin (SM). It may also act on ceramide phosphoethanolamine (CPE), lysophosphatidylcholine (LPC) and lysophosphatidylethanolamine (LPE), but not on lysophosphatidylserine (LPS), and lysophosphatidylglycerol (LPG). It acts by transphosphatidylation, releasing exclusively cyclic phosphate products as second products. Induces dermonecrosis, hemolysis, increased vascular permeability, edema, inflammatory response, and platelet aggregation. This Sicarius peruensis (Six-eyed sand spider) protein is Dermonecrotic toxin SpeSicTox-betaIB1b.